Consider the following 470-residue polypeptide: Iron-sulfur cluster assembly SufBD family protein ABCI9 (470 aa).

This sequence belongs to the iron-sulfur cluster assembly SufBD family.

This chain is Iron-sulfur cluster assembly SufBD family protein ABCI9 (ABCI9), found in Arabidopsis thaliana (Mouse-ear cress).